Consider the following 222-residue polypeptide: Uracil-DNA glycosylase (222 aa).

Asp-61 (proton acceptor) is an active-site residue.

It belongs to the uracil-DNA glycosylase (UDG) superfamily. UNG family.

It localises to the cytoplasm. It catalyses the reaction Hydrolyzes single-stranded DNA or mismatched double-stranded DNA and polynucleotides, releasing free uracil.. Excises uracil residues from the DNA which can arise as a result of misincorporation of dUMP residues by DNA polymerase or due to deamination of cytosine. The protein is Uracil-DNA glycosylase of Actinobacillus succinogenes (strain ATCC 55618 / DSM 22257 / CCUG 43843 / 130Z).